Consider the following 287-residue polypeptide: Protease HtpX (287 aa).

Transmembrane regions (helical) follow at residues 4–24 (VLLF…VFNI) and 37–57 (VGLL…SLWI). His-143 lines the Zn(2+) pocket. Glu-144 is an active-site residue. Residue His-147 participates in Zn(2+) binding. The next 2 helical transmembrane spans lie at 158-178 (LIQG…ASAI) and 194-214 (GVVM…VMWF). Glu-219 serves as a coordination point for Zn(2+).

This sequence belongs to the peptidase M48B family. Zn(2+) serves as cofactor.

It localises to the cell inner membrane. This chain is Protease HtpX, found in Idiomarina loihiensis (strain ATCC BAA-735 / DSM 15497 / L2-TR).